The primary structure comprises 163 residues: Putative 4-hydroxy-4-methyl-2-oxoglutarate aldolase (163 aa).

Residues 76 to 79 (GDML) and Arg98 each bind substrate. Position 99 (Asp99) interacts with a divalent metal cation.

The protein belongs to the class II aldolase/RraA-like family. In terms of assembly, homotrimer. A divalent metal cation serves as cofactor.

It carries out the reaction 4-hydroxy-4-methyl-2-oxoglutarate = 2 pyruvate. The enzyme catalyses oxaloacetate + H(+) = pyruvate + CO2. Its function is as follows. Catalyzes the aldol cleavage of 4-hydroxy-4-methyl-2-oxoglutarate (HMG) into 2 molecules of pyruvate. Also contains a secondary oxaloacetate (OAA) decarboxylase activity due to the common pyruvate enolate transition state formed following C-C bond cleavage in the retro-aldol and decarboxylation reactions. The sequence is that of Putative 4-hydroxy-4-methyl-2-oxoglutarate aldolase from Pseudomonas putida (strain ATCC 47054 / DSM 6125 / CFBP 8728 / NCIMB 11950 / KT2440).